The following is a 71-amino-acid chain: uncharacterized protein (71 aa).

This is an uncharacterized protein from Enterobacteria phage T4 (Bacteriophage T4).